The sequence spans 173 residues: Insertion element IS150 protein InsJ (173 aa).

The protein belongs to the IS150/IS1296 orfA family.

This chain is Insertion element IS150 protein InsJ (insJ), found in Escherichia coli (strain K12).